The chain runs to 89 residues: DNA maturase A (89 aa).

In terms of assembly, gp18 and gp19 associate with DNA and prohead.

Its function is as follows. During the growth of this phage, DNA is synthesized as concatemers. During DNA packaging mature monomers are cut from the concatemers. This is DNA maturase A (18) from Enterobacteria phage T3 (Bacteriophage T3).